The primary structure comprises 289 residues: Serine/threonine-protein phosphatase Pgam5, mitochondrial (289 aa).

The chain crosses the membrane as a helical span at residues 7 to 23 (FACGTGAGLAAYYLQRL).

It belongs to the phosphoglycerate mutase family. BPG-dependent PGAM subfamily. In terms of assembly, interacts with Pk92B/ASK1.

The protein localises to the mitochondrion outer membrane. It catalyses the reaction O-phospho-L-seryl-[protein] + H2O = L-seryl-[protein] + phosphate. The enzyme catalyses O-phospho-L-threonyl-[protein] + H2O = L-threonyl-[protein] + phosphate. Functionally, displays phosphatase activity for serine/threonine residues, and dephosphorylates and activates Pk92B kinase. Has apparently no phosphoglycerate mutase activity. In Drosophila sechellia (Fruit fly), this protein is Serine/threonine-protein phosphatase Pgam5, mitochondrial.